Here is a 521-residue protein sequence, read N- to C-terminus: GMP synthase [glutamine-hydrolyzing] (521 aa).

The region spanning 9–203 (KILILDFGSQ…VSDICQCKKN (195 aa)) is the Glutamine amidotransferase type-1 domain. Catalysis depends on cysteine 86, which acts as the Nucleophile. Catalysis depends on residues histidine 177 and glutamate 179. The GMPS ATP-PPase domain maps to 204 to 396 (WTTDNIITKL…LGLPTHMLNC (193 aa)). 231-237 (SGGVDSS) lines the ATP pocket.

Homodimer.

It catalyses the reaction XMP + L-glutamine + ATP + H2O = GMP + L-glutamate + AMP + diphosphate + 2 H(+). It participates in purine metabolism; GMP biosynthesis; GMP from XMP (L-Gln route): step 1/1. Catalyzes the synthesis of GMP from XMP. The chain is GMP synthase [glutamine-hydrolyzing] from Vesicomyosocius okutanii subsp. Calyptogena okutanii (strain HA).